We begin with the raw amino-acid sequence, 631 residues long: ATP-dependent DNA helicase 2 subunit 1 (631 aa).

The Ku domain occupies 262-487 (FYLGPNLSMS…VEFFQKIIKK (226 aa)). A disordered region spans residues 550–570 (AEPHKKRAAKSTTAGASGPKM).

This sequence belongs to the ku70 family. Heterodimer of a 70 kDa and a 80 kDa subunit.

Its subcellular location is the nucleus. The protein resides in the chromosome. The enzyme catalyses ATP + H2O = ADP + phosphate + H(+). In terms of biological role, single-stranded DNA-dependent ATP-dependent helicase. Involved in non-homologous end joining (NHEJ) DNA double strand break repair. Sequence-specific DNA-binding protein that has a high affinity for a 31 bp sequence in the Yp1 gene. Site-specific DNA binding to 31 bp P element inverted repeats. In Drosophila melanogaster (Fruit fly), this protein is ATP-dependent DNA helicase 2 subunit 1 (Irbp).